Consider the following 34-residue polypeptide: DDIT3 upstream open reading frame protein (34 aa).

In terms of assembly, interacts with DDIT3 (isoform 1).

The protein resides in the nucleus. It localises to the cytoplasm. Product of the upstream open reading frame (uORF) of DDIT3/CHOP that is specifically produced in absence of stress, thereby preventing translation of downstream stress effector DDIT3/CHOP. In Homo sapiens (Human), this protein is DDIT3 upstream open reading frame protein.